A 400-amino-acid chain; its full sequence is Elongation factor Tu 2 (400 aa).

The region spanning 10-209 is the tr-type G domain; the sequence is KPHVNIGTIG…AVDEYIPTPQ (200 aa). Residues 19–26 are G1; the sequence is GHVDHGKT. 19–26 provides a ligand contact to GTP; sequence GHVDHGKT. Threonine 26 lines the Mg(2+) pocket. A G2 region spans residues 60–64; that stretch reads GITIN. The segment at 81–84 is G3; sequence DCPG. GTP contacts are provided by residues 81 to 85 and 136 to 139; these read DCPGH and NKAD. Residues 136–139 are G4; it reads NKAD. Residues 174–176 form a G5 region; the sequence is SAL.

It belongs to the TRAFAC class translation factor GTPase superfamily. Classic translation factor GTPase family. EF-Tu/EF-1A subfamily. As to quaternary structure, monomer.

The protein resides in the cytoplasm. It carries out the reaction GTP + H2O = GDP + phosphate + H(+). In terms of biological role, GTP hydrolase that promotes the GTP-dependent binding of aminoacyl-tRNA to the A-site of ribosomes during protein biosynthesis. This Pelotomaculum thermopropionicum (strain DSM 13744 / JCM 10971 / SI) protein is Elongation factor Tu 2.